Reading from the N-terminus, the 244-residue chain is UL16-binding protein 1 (244 aa).

The first 25 residues, 1–25 (MAAAASPAFLLCLPLLHLLSGWSRA), serve as a signal peptide directing secretion. An MHC class I alpha-1 like region spans residues 26 to 117 (GWVDTHCLCY…IQVENLIPIE (92 aa)). An intrachain disulfide couples Cys-50 to Cys-66. A glycan (N-linked (GlcNAc...) asparagine) is linked at Asn-82. Residues 118-208 (PLTLQARMSC…MYWEQMLDPT (91 aa)) form an MHC class I alpha-2 like region. A disulfide bridge links Cys-127 with Cys-190. Gly-216 carries the GPI-anchor amidated glycine lipid modification. A propeptide spans 217 to 244 (TTQPKAMATTLSPWSLLIIFLCFILAGR) (removed in mature form).

It belongs to the MHC class I family. As to quaternary structure, interacts with KLRK1/NKG2D. Does not bind to beta2-microglobulin. (Microbial infection) In CMV-infected cells, interacts with the viral glycoprotein UL16; this interaction causes ULBP1 retention in the endoplasmic reticulum and cis-Golgi and prevents binding to and activation of KLRK1/NKG2D, providing CMV with an immune evasion mechanism. As to expression, expressed in T-cells, B-cells, erythroleukemia cell lines and in a wide range of tissues including heart, brain, lung, liver, testis, lymph node, thymus, tonsil and bone marrow. Also found in fetal heart, brain, lung and liver.

The protein localises to the cell membrane. It is found in the endoplasmic reticulum. In terms of biological role, binds and activates the KLRK1/NKG2D receptor, mediating natural killer cell cytotoxicity. The protein is UL16-binding protein 1 (ULBP1) of Homo sapiens (Human).